The chain runs to 444 residues: Aspartate--tRNA(Asp/Asn) ligase (444 aa).

Glu176 provides a ligand contact to L-aspartate. An aspartate region spans residues 198–201 (QLFK). Residue Arg220 participates in L-aspartate binding. ATP is bound by residues 220 to 222 (RAE), 228 to 230 (RHL), and Glu367. Residues Glu367 and Ser370 each contribute to the Mg(2+) site. Positions 370 and 374 each coordinate L-aspartate. 415 to 418 (GCER) contacts ATP.

This sequence belongs to the class-II aminoacyl-tRNA synthetase family. Type 2 subfamily. As to quaternary structure, homodimer. It depends on Mg(2+) as a cofactor.

The protein localises to the cytoplasm. It carries out the reaction tRNA(Asx) + L-aspartate + ATP = L-aspartyl-tRNA(Asx) + AMP + diphosphate. Its function is as follows. Aspartyl-tRNA synthetase with relaxed tRNA specificity since it is able to aspartylate not only its cognate tRNA(Asp) but also tRNA(Asn). Reaction proceeds in two steps: L-aspartate is first activated by ATP to form Asp-AMP and then transferred to the acceptor end of tRNA(Asp/Asn). The sequence is that of Aspartate--tRNA(Asp/Asn) ligase from Methanosarcina acetivorans (strain ATCC 35395 / DSM 2834 / JCM 12185 / C2A).